The sequence spans 157 residues: Small ribosomal subunit protein uS7 (157 aa).

Belongs to the universal ribosomal protein uS7 family. In terms of assembly, part of the 30S ribosomal subunit. Contacts proteins S9 and S11.

In terms of biological role, one of the primary rRNA binding proteins, it binds directly to 16S rRNA where it nucleates assembly of the head domain of the 30S subunit. Is located at the subunit interface close to the decoding center, probably blocks exit of the E-site tRNA. This chain is Small ribosomal subunit protein uS7, found in Polaromonas naphthalenivorans (strain CJ2).